A 196-amino-acid chain; its full sequence is Peptidyl-tRNA hydrolase (196 aa).

Tyr18 lines the tRNA pocket. The active-site Proton acceptor is His23. Phe69, Asn71, and Asn117 together coordinate tRNA.

It belongs to the PTH family. As to quaternary structure, monomer.

The protein localises to the cytoplasm. The enzyme catalyses an N-acyl-L-alpha-aminoacyl-tRNA + H2O = an N-acyl-L-amino acid + a tRNA + H(+). In terms of biological role, hydrolyzes ribosome-free peptidyl-tRNAs (with 1 or more amino acids incorporated), which drop off the ribosome during protein synthesis, or as a result of ribosome stalling. Catalyzes the release of premature peptidyl moieties from peptidyl-tRNA molecules trapped in stalled 50S ribosomal subunits, and thus maintains levels of free tRNAs and 50S ribosomes. This Vibrio vulnificus (strain CMCP6) protein is Peptidyl-tRNA hydrolase.